The primary structure comprises 633 residues: Leucine-rich repeat and IQ domain-containing protein 3 (633 aa).

LRR repeat units lie at residues 51-72, 73-94, and 98-119; these read SLRV…QGCK, KLIK…TFWN, and NLKL…CVLS. The 48-residue stretch at 132 to 179 folds into the LRRCT domain; the sequence is CPVSLKKGYRHVLVNSIWPLKALDHHVISDEEIIQNWHLPERFKTFSQ. Residues 215-244 enclose the IQ domain; that stretch reads HNSPVLIIQRWIRGFIVRKHLSPYFTRKRH. A disordered region spans residues 322-343; the sequence is NSKQPRHHIQKGQNEMKSDSED. The stretch at 556–616 forms a coiled coil; it reads EKREKRKYKQ…AKVEFINTYY (61 aa).

This is Leucine-rich repeat and IQ domain-containing protein 3 (Lrriq3) from Rattus norvegicus (Rat).